We begin with the raw amino-acid sequence, 977 residues long: Macrophage colony-stimulating factor 1 receptor (977 aa).

The N-terminal stretch at 1-19 (MELGPPLVLLLATVWHGQG) is a signal peptide. At 20 to 515 (APVIEPSGPE…QLPDESLFTP (496 aa)) the chain is on the extracellular side. Ig-like C2-type domains lie at 24-104 (EPSG…VKDP), 107-197 (SWNL…KVNR), 204-298 (QIKL…VVES), 299-397 (AYLN…LTLR), and 398-503 (YPPE…SLGQ). 3 disulfide bridges follow: Cys-42–Cys-84, Cys-127–Cys-177, and Cys-224–Cys-278. 2 N-linked (GlcNAc...) asparagine glycosylation sites follow: Asn-45 and Asn-73. N-linked (GlcNAc...) asparagine glycosylation is found at Asn-302, Asn-335, Asn-389, Asn-410, Asn-449, Asn-478, and Asn-491. Cysteines 417 and 483 form a disulfide. Residues 516 to 536 (VVVACMSVMSLLVLLLLLLLY) traverse the membrane as a helical segment. At 537 to 977 (KYKQKPKYQV…LLQPNNYQFC (441 aa)) the chain is on the cytoplasmic side. The segment at 540-572 (QKPKYQVRWKIIERYEGNSYTFIDPTQLPYNEK) is regulatory juxtamembrane domain. Residues Tyr-544 and Tyr-559 each carry the phosphotyrosine; by autocatalysis modification. The Protein kinase domain maps to 580 to 913 (LQFGKTLGAG…ICFLLQEQAR (334 aa)). Residues 586–594 (LGAGAFGKV) and Lys-614 each bind ATP. Phosphotyrosine; by autocatalysis occurs at positions 697 and 706. Phosphoserine is present on Ser-711. The residue at position 721 (Tyr-721) is a Phosphotyrosine; by autocatalysis. Asp-776 serves as the catalytic Proton acceptor. The segment at 794–816 (DFGLARDIMNDSNYVVKGNARLP) is activation loop. Phosphotyrosine; by autocatalysis occurs at positions 807 and 921. Residues 921–957 (YANLPSSGGSSGSDSGGGSSGGSSSEPEEESSSEHLA) are disordered. The span at 929 to 941 (GSSGSDSGGGSSG) shows a compositional bias: gly residues. Tyr-974 bears the Phosphotyrosine; by autocatalysis mark.

This sequence belongs to the protein kinase superfamily. Tyr protein kinase family. CSF-1/PDGF receptor subfamily. Monomer. Homodimer. Interacts with CSF1 and IL34. Interaction with dimeric CSF1 or IL34 leads to receptor homodimerization. Interacts with INPPL1/SHIP2 and THOC5. Interacts (tyrosine phosphorylated) with PLCG2 (via SH2 domain). Interacts (tyrosine phosphorylated) with PIK3R1 (via SH2 domain). Interacts (tyrosine phosphorylated) with FYN, YES1 and SRC (via SH2 domain). Interacts (tyrosine phosphorylated) with CBL, GRB2 and SLA2. Autophosphorylated in response to CSF1 or IL34 binding. Phosphorylation at Tyr-559 is important for normal down-regulation of signaling by ubiquitination, internalization and degradation. Phosphorylation at Tyr-559 and Tyr-807 is important for interaction with SRC family members, including FYN, YES1 and SRC, and for subsequent activation of these protein kinases. Phosphorylation at Tyr-697 and Tyr-921 is important for interaction with GRB2. Phosphorylation at Tyr-721 is important for interaction with PIK3R1. Phosphorylation at Tyr-721 and Tyr-807 is important for interaction with PLCG2. Phosphorylation at Tyr-974 is important for interaction with CBL. Dephosphorylation by PTPN2 negatively regulates downstream signaling and macrophage differentiation. In terms of processing, ubiquitinated. Becomes rapidly polyubiquitinated after autophosphorylation, leading to its degradation. As to expression, widely expressed.

Its subcellular location is the cell membrane. The enzyme catalyses L-tyrosyl-[protein] + ATP = O-phospho-L-tyrosyl-[protein] + ADP + H(+). Its activity is regulated as follows. Present in an inactive conformation in the absence of bound ligand. CSF1 or IL34 binding leads to dimerization and activation by autophosphorylation on tyrosine residues. Inhibited by imatinib/STI-571 (Gleevec), dasatinib, sunitinib/SU11248, lestaurtinib/CEP-701, midostaurin/PKC-412, Ki20227, linifanib/ABT-869, Axitinib/AG013736, sorafenib/BAY 43-9006 and GW2580. Tyrosine-protein kinase that acts as a cell-surface receptor for CSF1 and IL34 and plays an essential role in the regulation of survival, proliferation and differentiation of hematopoietic precursor cells, especially mononuclear phagocytes, such as macrophages and monocytes. Promotes the release of pro-inflammatory chemokines in response to IL34 and CSF1, and thereby plays an important role in innate immunity and in inflammatory processes. Plays an important role in the regulation of osteoclast proliferation and differentiation, the regulation of bone resorption, and is required for normal bone and tooth development. Required for normal male and female fertility, and for normal development of milk ducts and acinar structures in the mammary gland during pregnancy. Promotes reorganization of the actin cytoskeleton, regulates formation of membrane ruffles, cell adhesion and cell migration, and promotes cancer cell invasion. Activates several signaling pathways in response to ligand binding, including the ERK1/2 and the JNK pathway. Phosphorylates PIK3R1, PLCG2, GRB2, SLA2 and CBL. Activation of PLCG2 leads to the production of the cellular signaling molecules diacylglycerol and inositol 1,4,5-trisphosphate, that then lead to the activation of protein kinase C family members, especially PRKCD. Phosphorylation of PIK3R1, the regulatory subunit of phosphatidylinositol 3-kinase, leads to activation of the AKT1 signaling pathway. Activated CSF1R also mediates activation of the MAP kinases MAPK1/ERK2 and/or MAPK3/ERK1, and of the SRC family kinases SRC, FYN and YES1. Activated CSF1R transmits signals both via proteins that directly interact with phosphorylated tyrosine residues in its intracellular domain, or via adapter proteins, such as GRB2. Promotes activation of STAT family members STAT3, STAT5A and/or STAT5B. Promotes tyrosine phosphorylation of SHC1 and INPP5D/SHIP-1. Receptor signaling is down-regulated by protein phosphatases, such as INPP5D/SHIP-1, that dephosphorylate the receptor and its downstream effectors, and by rapid internalization of the activated receptor. In the central nervous system, may play a role in the development of microglia macrophages. The chain is Macrophage colony-stimulating factor 1 receptor (Csf1r) from Mus musculus (Mouse).